The sequence spans 315 residues: MEHNIAEISVSSLTDPHFLRENKNLFIPDTDPPLSKIETINALSELSIGSSQEIQNPDHKTYSKLGFGKPLFTRADRHYVDPPLSNQDVGLISFVPCNDAKPNKYGVYGFAKIRGTFANVDESDQRASELIQKHDSVHKIYHVKVGTPFPIVHPKISSQYAASVKEIDVKADAKNEISRFVKTAGEEDKKVMEELKEREKQLREDVSKTPEQKLNELTPLDQYIYARKRLSDNLFVFEEHRKKLHDVKKVILQAELEADSLEKTNPEVINQYKEKYEKAAKEAGIDKSTDAMAVMIKENFYNKPNLQKIFSENLV.

2 coiled-coil regions span residues 184-212 (AGEEDKKVMEELKEREKQLREDVSKTPEQ) and 238-275 (EEHRKKLHDVKKVILQAELEADSLEKTNPEVINQYKEK).

This sequence belongs to the IIV-6 287R family.

This is an uncharacterized protein from Acheta domesticus (House cricket).